A 694-amino-acid polypeptide reads, in one-letter code: Polyribonucleotide nucleotidyltransferase (694 aa).

The Mg(2+) site is built by Asp-485 and Asp-491. One can recognise a KH domain in the interval Pro-552–Ile-611. Positions Gly-621–Lys-689 constitute an S1 motif domain.

It belongs to the polyribonucleotide nucleotidyltransferase family. Mg(2+) is required as a cofactor.

The protein localises to the cytoplasm. It catalyses the reaction RNA(n+1) + phosphate = RNA(n) + a ribonucleoside 5'-diphosphate. Involved in mRNA degradation. Catalyzes the phosphorolysis of single-stranded polyribonucleotides processively in the 3'- to 5'-direction. This chain is Polyribonucleotide nucleotidyltransferase, found in Chlamydia abortus (strain DSM 27085 / S26/3) (Chlamydophila abortus).